The sequence spans 221 residues: Thiopurine S-methyltransferase (221 aa).

The S-adenosyl-L-methionine site is built by Trp-12, Leu-47, Glu-68, and Arg-125.

It belongs to the class I-like SAM-binding methyltransferase superfamily. TPMT family.

Its subcellular location is the cytoplasm. It carries out the reaction S-adenosyl-L-methionine + a thiopurine = S-adenosyl-L-homocysteine + a thiopurine S-methylether.. This Legionella pneumophila subsp. pneumophila (strain Philadelphia 1 / ATCC 33152 / DSM 7513) protein is Thiopurine S-methyltransferase.